We begin with the raw amino-acid sequence, 726 residues long: A-type inclusion protein A25 homolog (726 aa).

The tract at residues 342–361 (TNTGIEEPHATGGDKEDQPI) is disordered. A compositionally biased stretch (basic and acidic residues) spans 347 to 360 (EEPHATGGDKEDQP). Residues 426–713 (TELEEAKRKL…ERQLNDCRRN (288 aa)) form a 4 X approximate tandem repeats region. 4 repeat units span residues 612–634 (RELEEERRRVKDLESRLDECTRN), 639–661 (QEVDALRSRIRELENKLTDCIES), 667–689 (TEISRLQSRISDLERQLNECRGN), and 691–713 (TEISRLESRISDLERQLNDCRRN).

This sequence belongs to the poxviridae A25 protein family. As to quaternary structure, interacts (via N-terminus) with protein A26.

The protein resides in the virion. In terms of biological role, structural protein that forms a matrix surrounding the mature virion (MV) through interaction with protein A26. Presence of protein A25 in the virion structurally prevents direct virus-cell fusion mechanism. In Camelus, this protein is A-type inclusion protein A25 homolog.